A 137-amino-acid polypeptide reads, in one-letter code: Putative pre-16S rRNA nuclease (137 aa).

This sequence belongs to the YqgF nuclease family.

Its subcellular location is the cytoplasm. Functionally, could be a nuclease involved in processing of the 5'-end of pre-16S rRNA. This is Putative pre-16S rRNA nuclease from Flavobacterium psychrophilum (strain ATCC 49511 / DSM 21280 / CIP 103535 / JIP02/86).